Here is a 694-residue protein sequence, read N- to C-terminus: Elongation factor G (694 aa).

In terms of domain architecture, tr-type G spans serine 9–lysine 288. GTP is bound by residues alanine 18–threonine 25, aspartate 82–histidine 86, and asparagine 136–aspartate 139.

The protein belongs to the TRAFAC class translation factor GTPase superfamily. Classic translation factor GTPase family. EF-G/EF-2 subfamily.

The protein localises to the cytoplasm. Catalyzes the GTP-dependent ribosomal translocation step during translation elongation. During this step, the ribosome changes from the pre-translocational (PRE) to the post-translocational (POST) state as the newly formed A-site-bound peptidyl-tRNA and P-site-bound deacylated tRNA move to the P and E sites, respectively. Catalyzes the coordinated movement of the two tRNA molecules, the mRNA and conformational changes in the ribosome. The polypeptide is Elongation factor G (Chlamydia caviae (strain ATCC VR-813 / DSM 19441 / 03DC25 / GPIC) (Chlamydophila caviae)).